Consider the following 483-residue polypeptide: Probable zinc metalloprotease PTRG_04977 (483 aa).

An N-terminal signal peptide occupies residues 1–18 (MLFRSALLSNVLLLPACA). Asn96 and Asn121 each carry an N-linked (GlcNAc...) asparagine glycan. Positions 167, 187, and 220 each coordinate Zn(2+). Asn235 is a glycosylation site (N-linked (GlcNAc...) asparagine). Asp247 serves as a coordination point for Zn(2+). N-linked (GlcNAc...) asparagine glycosylation is found at Asn310, Asn362, Asn401, Asn411, and Asn421. Residues 396-483 (PAMPRNVTID…KSPAVYPFPG (88 aa)) form the Fibronectin type-III domain.

Belongs to the peptidase M28 family. M28B subfamily. Zn(2+) is required as a cofactor.

It is found in the secreted. The sequence is that of Probable zinc metalloprotease PTRG_04977 from Pyrenophora tritici-repentis (strain Pt-1C-BFP) (Wheat tan spot fungus).